A 690-amino-acid chain; its full sequence is MHEHDSHGEAAHSNSEDMQMIHQHHEHHGHEEEHSAHHEKMKHSADHGDHHRMMMEDFKKRFYVSTLLTIPILILSPAIQTFLGFRVEFAGSLYILFLLSSAVYFYGGYPFLKGIFDELRRRQPGMMTLIAVAISVAYFYSSAVVFGLKGKFFFWELATLIDIMLLGHYIEMRSVLGASRALEELVKIMPSEAHLLKDGEIVEVKVENLKPGDKVLVKPGEKIPVDGIVVEGESFVNEAMLTGESKPVAKKPGDTVIGGAINGEGSLVVEVEKTGKDTYLNQVIELVRQAQESKSRTQDLANRAALLLTVIALTVGSVTLAIWLAYIADFAFAIERAVTVMVITCPHALGLAIPLVVAVSTSLAAKSGLLIRDRQAFERAKDLQAVIFDKTGTLTEGRFGVTDIVGFNHSEDELLQIAASLEARSEHPIAAAIVEEAEKRGFGLTEVEEFRAIPGKGVEGIVNGRRYMVVSPGYIRELGIKTDESVEKLKQQGKTVVFILKNGEVSGVIALADRIRPESREAISKLKAIGIKCMMLTGDNRFVAKWVAEELGLDDYFAEVLPHEKAEKVKEVQQKYVTAMVGDGVNDAPALAQADVGIAIGAGTDVAVETADIVLVRNDPRDVAAIVELSRKTYSKMKQNLLWATGYNAFAIPLAAGVLYSAGILLSPAVGAILMSLSTVIVAINARLLR.

At 1 to 64 the chain is on the cytoplasmic side; it reads MHEHDSHGEA…MEDFKKRFYV (64 aa). A disordered region spans residues 23 to 46; that stretch reads QHHEHHGHEEEHSAHHEKMKHSAD. The span at 28–46 shows a compositional bias: basic and acidic residues; it reads HGHEEEHSAHHEKMKHSAD. The helical transmembrane segment at 65–85 threads the bilayer; that stretch reads STLLTIPILILSPAIQTFLGF. The Extracellular portion of the chain corresponds to 86–91; sequence RVEFAG. The helical transmembrane segment at 92 to 112 threads the bilayer; it reads SLYILFLLSSAVYFYGGYPFL. Residues 113-127 are Cytoplasmic-facing; sequence KGIFDELRRRQPGMM. The chain crosses the membrane as a helical span at residues 128 to 148; that stretch reads TLIAVAISVAYFYSSAVVFGL. Topologically, residues 149–151 are extracellular; that stretch reads KGK. A helical membrane pass occupies residues 152 to 172; it reads FFFWELATLIDIMLLGHYIEM. The Cytoplasmic portion of the chain corresponds to 173-303; it reads RSVLGASRAL…KSRTQDLANR (131 aa). Residues 304-324 traverse the membrane as a helical segment; that stretch reads AALLLTVIALTVGSVTLAIWL. Residues 325 to 336 lie on the Extracellular side of the membrane; it reads AYIADFAFAIER. The helical transmembrane segment at 337–357 threads the bilayer; that stretch reads AVTVMVITCPHALGLAIPLVV. The Cytoplasmic portion of the chain corresponds to 358–640; sequence AVSTSLAAKS…RKTYSKMKQN (283 aa). D389 functions as the 4-aspartylphosphate intermediate in the catalytic mechanism. Residues 390-391, 537-538, and K565 contribute to the phosphate site; these read KT and TG. Positions 583 and 587 each coordinate Mg(2+). Residues 641–661 traverse the membrane as a helical segment; the sequence is LLWATGYNAFAIPLAAGVLYS. Residues 662-663 are Extracellular-facing; it reads AG. The chain crosses the membrane as a helical span at residues 664 to 684; it reads ILLSPAVGAILMSLSTVIVAI. Residues 685-690 lie on the Cytoplasmic side of the membrane; that stretch reads NARLLR.

The protein belongs to the cation transport ATPase (P-type) (TC 3.A.3) family. Type IB subfamily.

It is found in the cell membrane. It carries out the reaction Cu(2+)(in) + ATP + H2O = Cu(2+)(out) + ADP + phosphate + H(+). With respect to regulation, activated by Cu(2+) and to a lesser extent by Ag(+) and Cu(+). Functionally, involved in copper export. The chain is Copper-exporting P-type ATPase B (copB) from Archaeoglobus fulgidus (strain ATCC 49558 / DSM 4304 / JCM 9628 / NBRC 100126 / VC-16).